Here is a 240-residue protein sequence, read N- to C-terminus: Aquaporin SIP1-1 (240 aa).

Transmembrane regions (helical) follow at residues 13–33 (LMTFSWVVLSATFGIQTAAII) and 44–64 (APLVILTSLIFVYVSIFTVIF). The NPA 1 motif lies at 70 to 72 (NPT). A run of 3 helical transmembrane segments spans residues 89 to 109 (SLAIRLPAQAIGAAGGALAIM), 132 to 152 (GAIAETILSFGITFAVLLIIL), and 163 to 183 (FLLALATISFVVAGSKYTGPA). The NPA 2 signature appears at 185–187 (NPA). Residues 203–223 (DHIYVYWISSFVGALSAALLF) traverse the membrane as a helical segment.

This sequence belongs to the MIP/aquaporin (TC 1.A.8) family. SIP (TC 1.A.8.10) subfamily. In terms of tissue distribution, expressed in roots and above ground. Expressed in elongating regions of the root tips, trichome cells of the rosette leaves, vascular tissues of the flower petals, stigma, stamens (anthers and filaments), pollen and the top and bottom (receptacle) of siliques.

The protein resides in the endoplasmic reticulum membrane. In terms of biological role, water channel required to facilitate the transport of water across cell membrane. The sequence is that of Aquaporin SIP1-1 (SIP1-1) from Arabidopsis thaliana (Mouse-ear cress).